We begin with the raw amino-acid sequence, 865 residues long: Protein translocase subunit SecA (865 aa).

Residues Q85, 103-107 (GEGKT), and D505 each bind ATP. Zn(2+) contacts are provided by C847, C849, C858, and H859.

The protein belongs to the SecA family. Monomer and homodimer. Part of the essential Sec protein translocation apparatus which comprises SecA, SecYEG and auxiliary proteins SecDF. Other proteins may also be involved. It depends on Zn(2+) as a cofactor.

It is found in the cell membrane. Its subcellular location is the cytoplasm. The enzyme catalyses ATP + H2O + cellular proteinSide 1 = ADP + phosphate + cellular proteinSide 2.. Part of the Sec protein translocase complex. Interacts with the SecYEG preprotein conducting channel. Has a central role in coupling the hydrolysis of ATP to the transfer of proteins into and across the cell membrane, serving as an ATP-driven molecular motor driving the stepwise translocation of polypeptide chains across the membrane. The polypeptide is Protein translocase subunit SecA (Lactococcus lactis subsp. cremoris (strain MG1363)).